Consider the following 255-residue polypeptide: Expansin-A25 (255 aa).

The signal sequence occupies residues 1–26 (MEYAILFATSLVITVLAASGFAPAHG). One can recognise an Expansin-like EG45 domain in the interval 45–160 (GGACGYGNLY…QQVKCWRQGG (116 aa)). Positions 170–249 (FFELVLVSNV…WWSFGMTFTS (80 aa)) constitute an Expansin-like CBD domain.

This sequence belongs to the expansin family. Expansin A subfamily. In terms of tissue distribution, expressed in panicles and flowers.

The protein localises to the secreted. Its subcellular location is the cell wall. It localises to the membrane. In terms of biological role, may cause loosening and extension of plant cell walls by disrupting non-covalent bonding between cellulose microfibrils and matrix glucans. No enzymatic activity has been found. May be required for rapid internodal elongation in deepwater rice during submergence. This is Expansin-A25 (EXPA25) from Oryza sativa subsp. japonica (Rice).